The chain runs to 761 residues: Wall-associated receptor kinase-like 4 (761 aa).

The N-terminal stretch at Met-1–Ala-26 is a signal peptide. Over Arg-27–Pro-349 the chain is Extracellular. N-linked (GlcNAc...) asparagine glycosylation is found at Asn-64, Asn-166, Asn-206, Asn-226, and Asn-262. An atypical EGF-like region spans residues Cys-278–Cys-339. Disulfide bonds link Cys-280/Cys-293, Cys-316/Cys-330, and Cys-325/Cys-339. The chain crosses the membrane as a helical span at residues Val-350 to Leu-370. At Tyr-371–Trp-761 the chain is on the cytoplasmic side. Residues Phe-424–Ile-697 enclose the Protein kinase domain. Residues Leu-430–Val-438 and Lys-452 contribute to the ATP site. Phosphotyrosine is present on Tyr-497. The active-site Proton acceptor is the Asp-549. 2 positions are modified to phosphothreonine: Thr-583 and Thr-588. Tyr-596 bears the Phosphotyrosine mark. The interval Ser-701–Trp-761 is disordered. The segment covering Asn-708–Trp-732 has biased composition (acidic residues).

The protein belongs to the protein kinase superfamily. Ser/Thr protein kinase family. Expressed in the whole plant. Detected in root-shoot junctions and lateral root initiation sites.

It is found in the membrane. It catalyses the reaction L-seryl-[protein] + ATP = O-phospho-L-seryl-[protein] + ADP + H(+). It carries out the reaction L-threonyl-[protein] + ATP = O-phospho-L-threonyl-[protein] + ADP + H(+). In terms of biological role, serine/threonine-protein kinase that may function as a signaling receptor of extracellular matrix component. Plays a role in plant mineral nutrients response. The chain is Wall-associated receptor kinase-like 4 (WAKL4) from Arabidopsis thaliana (Mouse-ear cress).